Reading from the N-terminus, the 210-residue chain is Holliday junction resolvase RecU (210 aa).

4 residues coordinate Mg(2+): T93, D95, E108, and Q127.

This sequence belongs to the RecU family. The cofactor is Mg(2+).

Its subcellular location is the cytoplasm. The catalysed reaction is Endonucleolytic cleavage at a junction such as a reciprocal single-stranded crossover between two homologous DNA duplexes (Holliday junction).. In terms of biological role, endonuclease that resolves Holliday junction intermediates in genetic recombination. Cleaves mobile four-strand junctions by introducing symmetrical nicks in paired strands. Promotes annealing of linear ssDNA with homologous dsDNA. Required for DNA repair, homologous recombination and chromosome segregation. The protein is Holliday junction resolvase RecU of Lactobacillus helveticus (strain DPC 4571).